The sequence spans 704 residues: Protein NPG1 (704 aa).

TPR repeat units lie at residues 24–57 (NGICMKTTEVEAKLDEGNIQEAESSLREGLSLNF), 58–90 (EEARALLGRLEYQRGNLEGALRVFEGIDLQAAI), 177–210 (SHAVELLPALWKESGDYQEAISAYRRALLSQWNL), 309–342 (IERWNTLALSYSAAGQNSAAVNLLRKSLHKHEQP), 430–463 (PDLIFELGVQYAEQRNLKAASRYAKEFIDATGGS), 555–588 (FEVWHGLAYLYSSLSHWNDVEVCLKKAGELKQYS), 589–622 (ASMLHTEGRMWEGRKEFKPALAAFLDGLLLDGSS), and 662–695 (RKAWYYLGMVHKSDGRIADATDCFQAASMLEESD).

As to quaternary structure, interacts with calmodulin in a calcium-dependent manner. As to expression, expressed only in pollen and in pollen tubes.

Functionally, calmodulin-binding protein essential for pollen germination, but not necessary for microsporogenesis or gametogenesis. The sequence is that of Protein NPG1 from Arabidopsis thaliana (Mouse-ear cress).